Reading from the N-terminus, the 204-residue chain is Protein FAM167A (204 aa).

Residues 58–80 (GLAVSDGSTELEKDAGLKPRATP) form a disordered region. A coiled-coil region spans residues 113 to 146 (LRKELMEMRIQDQQLARQLMRLRGDINKLKVEQT).

The protein belongs to the FAM167 (SEC) family.

In Danio rerio (Zebrafish), this protein is Protein FAM167A (fam167a).